The chain runs to 445 residues: Histamine H3 receptor (445 aa).

At 1-39 (MERAPPDGLMNASGTLAGEAAAAGGARGFSAAWTAVLAA) the chain is on the extracellular side. N11 carries N-linked (GlcNAc...) asparagine glycosylation. Residues 40–60 (LMALLIVATVLGNALVMLAFV) traverse the membrane as a helical segment. The Cytoplasmic portion of the chain corresponds to 61 to 70 (ADSSLRTQNN). Residues 71 to 91 (FFLLNLAISDFLVGAFCIPLY) traverse the membrane as a helical segment. At 92 to 108 (VPYVLTGRWTFGRGLCK) the chain is on the extracellular side. C107 and C188 are joined by a disulfide. The chain crosses the membrane as a helical span at residues 109-129 (LWLVVDYLLCASSVFNIVLIS). The Cytoplasmic portion of the chain corresponds to 130–156 (YDRFLSVTRAVSYRAQQGDTRRAVRKM). A helical membrane pass occupies residues 157 to 177 (ALVWVLAFLLYGPAILSWEYL). Residues 178–196 (SGGSSIPEGHCYAEFFYNW) lie on the Extracellular side of the membrane. Residues 197–217 (YFLITASTLEFFTPFLSVTFF) form a helical membrane-spanning segment. At 218-359 (NLSIYLNIQR…LSRDKKVAKS (142 aa)) the chain is on the cytoplasmic side. Disordered regions lie at residues 234–259 (DGGR…PSCW) and 286–336 (AGEA…LEKR). The segment covering 241 to 256 (PEPPPDAQPSPPPAPP) has biased composition (pro residues). Positions 290-299 (ALGGGSGGGA) are enriched in gly residues. The segment covering 300–312 (AASPTSSSGSSSR) has biased composition (low complexity). A helical transmembrane segment spans residues 360-380 (LAIIVSIFGLCWAPYTLLMII). The Extracellular segment spans residues 381-396 (RAACHGRCIPDYWYET). A helical membrane pass occupies residues 397 to 417 (SFWLLWANSAVNPVLYPLCHY). Topologically, residues 418-445 (SFRRAFTKLLCPQKLKVQPHGSLEQCWK) are cytoplasmic. Phosphoserine is present on S439.

The protein belongs to the G-protein coupled receptor 1 family. As to expression, expressed abundantly in brain, most notably throughout the thalamus, the ventromedial hypothalamus and the caudate nucleus. Isoform 1 is largely predominant in all tissues.

The protein resides in the cell membrane. The H3 subclass of histamine receptors could mediate the histamine signals in CNS and peripheral nervous system. Signals through the inhibition of adenylate cyclase and displays high constitutive activity (spontaneous activity in the absence of agonist). The protein is Histamine H3 receptor (Hrh3) of Rattus norvegicus (Rat).